A 245-amino-acid chain; its full sequence is Phosphoribosylaminoimidazole-succinocarboxamide synthase (245 aa).

Belongs to the SAICAR synthetase family.

The catalysed reaction is 5-amino-1-(5-phospho-D-ribosyl)imidazole-4-carboxylate + L-aspartate + ATP = (2S)-2-[5-amino-1-(5-phospho-beta-D-ribosyl)imidazole-4-carboxamido]succinate + ADP + phosphate + 2 H(+). The protein operates within purine metabolism; IMP biosynthesis via de novo pathway; 5-amino-1-(5-phospho-D-ribosyl)imidazole-4-carboxamide from 5-amino-1-(5-phospho-D-ribosyl)imidazole-4-carboxylate: step 1/2. The chain is Phosphoribosylaminoimidazole-succinocarboxamide synthase from Nostoc punctiforme (strain ATCC 29133 / PCC 73102).